The sequence spans 1530 residues: Neurexin-1 (1530 aa).

The signal sequence occupies residues methionine 1–glycine 30. In terms of domain architecture, Laminin G-like 1 spans leucine 31–cysteine 217. The Extracellular segment spans residues leucine 31–threonine 1454. Residues asparagine 125 and asparagine 190 are each glycosylated (N-linked (GlcNAc...) asparagine). Positions proline 196 to alanine 219 are disordered. Residues glycine 213–cysteine 255 enclose the EGF-like 1 domain. 2 cysteine pairs are disulfide-bonded: cysteine 228-cysteine 243 and cysteine 245-cysteine 255. 2 consecutive Laminin G-like domains span residues isoleucine 299 to cysteine 496 and aspartate 503 to cysteine 695. Positions 345, 362, and 430 each coordinate Ca(2+). Disulfide bonds link cysteine 460–cysteine 496, cysteine 666–cysteine 695, cysteine 703–cysteine 714, cysteine 708–cysteine 723, and cysteine 725–cysteine 735. In terms of domain architecture, EGF-like 2 spans threonine 699–glutamate 736. Laminin G-like domains are found at residues valine 741–cysteine 914 and aspartate 928–cysteine 1103. Ca(2+) is bound by residues aspartate 788 and leucine 805. Residue asparagine 813 is glycosylated (N-linked (GlcNAc...) asparagine). Residue arginine 864 participates in Ca(2+) binding. 5 disulfides stabilise this stretch: cysteine 906-cysteine 914, cysteine 1075-cysteine 1103, cysteine 1110-cysteine 1121, cysteine 1115-cysteine 1130, and cysteine 1132-cysteine 1142. The 38-residue stretch at proline 1106–asparagine 1143 folds into the EGF-like 3 domain. The region spanning tyrosine 1149 to valine 1347 is the Laminin G-like 6 domain. Positions 1199 and 1216 each coordinate Ca(2+). Asparagine 1246 carries N-linked (GlcNAc...) asparagine glycosylation. Ca(2+) is bound by residues isoleucine 1298 and asparagine 1300. O-linked (Xyl...) (heparan sulfate) serine glycosylation occurs at serine 1408. The disordered stretch occupies residues proline 1412 to serine 1443. A helical membrane pass occupies residues glycine 1455–methionine 1475. Residues tyrosine 1476–valine 1530 lie on the Cytoplasmic side of the membrane. The segment at asparagine 1497–asparagine 1523 is interaction with CASK. Residues asparagine 1497 to valine 1530 form a disordered region.

Belongs to the neurexin family. As to quaternary structure, interacts (via laminin G-like domain 2 and/or laminin G-like domain 6) with NLGN1 forming a heterotetramer, where one NLGN1 dimer interacts with one NRXN1 dimer. Also interacts (via laminin G-like domain 2 and/or laminin G-like domain 6) with NLGN2, NLGN3 and NLGN4L; interactions with NLGN1, NLGN2, NLGN3 and NLGN4L are calcium-dependent. Interacts (via cytoplasmic C-terminal region) with CASK (via the PDZ, SH3 and guanylate kinase-like domains). Interacts (via cytoplasmic C-terminus) with CASKIN1 and APBA1. Interacts (via laminin G-like domain 2) with NXPH1 and NXPH3. Alpha-type isoforms (neurexin-1-alpha) interact (via laminin G-like domain 2 and/or laminin G-like domain 6) with DAG1 (via alpha-dystroglycan chain). Interacts with LRRTM1, LRRTM2, LRRTM3 and LRRTM4. Interacts with SYT13 and SYTL1. Interacts with CBLN1, CBLN2 and, less avidly, with CBLN4. Interacts with CLSTN3. Alpha-type isoforms interact with alpha-latrotoxin from spider venom. O-glycosylated; contains heparan sulfate. Heparan sulfate attachment is required for synapse development by mediating interactions with neuroligins and LRRTM2. As to expression, brain (neuronal synapse).

It is found in the presynaptic cell membrane. Functionally, cell surface protein involved in cell-cell-interactions, exocytosis of secretory granules and regulation of signal transmission. Function is isoform-specific. Alpha-type isoforms have a long N-terminus with six laminin G-like domains and play an important role in synaptic signal transmission. Alpha-type isoforms play a role in the regulation of calcium channel activity and Ca(2+)-triggered neurotransmitter release at synapses and at neuromuscular junctions. They play an important role in Ca(2+)-triggered exocytosis of secretory granules in pituitary gland. They may affect their functions at synapses and in endocrine cells via their interactions with proteins from the exocytotic machinery. Likewise, alpha-type isoforms play a role in regulating the activity of postsynaptic NMDA receptors, a subtype of glutamate-gated ion channels. Both alpha-type and beta-type isoforms may play a role in the formation or maintenance of synaptic junctions via their interactions (via the extracellular domains) with neuroligin family members, CBLN1 or CBLN2. In vitro, triggers the de novo formation of presynaptic structures. May be involved in specification of excitatory synapses. Alpha-type isoforms were first identified as receptors for alpha-latrotoxin from spider venom. The polypeptide is Neurexin-1 (Nrxn1) (Rattus norvegicus (Rat)).